The primary structure comprises 765 residues: Dipeptidyl peptidase 4 (765 aa).

The Cytoplasmic segment spans residues M1–K6. A helical; Signal-anchor for type II membrane protein membrane pass occupies residues V7–T29. The Extracellular segment spans residues K30–L765. 9 N-linked (GlcNAc...) asparagine glycosylation sites follow: N84, N91, N149, N218, N228, N271, N280, N320, and N392. Intrachain disulfides connect C384–C393, C443–C446, and C453–C471. Residue N495 is glycosylated (N-linked (GlcNAc...) asparagine). The active-site Charge relay system is the S629. C648 and C761 are disulfide-bonded. The N-linked (GlcNAc...) asparagine glycan is linked to N684. Residues D707 and H739 each act as charge relay system in the active site.

Belongs to the peptidase S9B family. DPPIV subfamily. Monomer. Homodimer. Heterodimer with Seprase (FAP). Requires homodimerization for optimal dipeptidyl peptidase activity and T-cell costimulation. Found in a membrane raft complex, at least composed of BCL10, CARD11, DPP4 and IKBKB. Associates with collagen. Interacts with PTPRC; the interaction is enhanced in an interleukin-12-dependent manner in activated lymphocytes. Interacts (via extracellular domain) with ADA; does not inhibit its dipeptidyl peptidase activity. Interacts with CAV1 (via the N-terminus); the interaction is direct. Interacts (via cytoplasmic tail) with CARD11 (via PDZ domain); its homodimerization is necessary for interaction with CARD11. Interacts with IGF2R; the interaction is direct. Interacts with GPC3. Post-translationally, the soluble form (Dipeptidyl peptidase 4 soluble form also named SDPP) derives from the membrane form (Dipeptidyl peptidase 4 membrane form also named MDPP) by proteolytic processing. N- and O-Glycosylated. In terms of processing, phosphorylated. Mannose 6-phosphate residues in the carbohydrate moiety are necessary for interaction with IGF2R in activated T-cells. Mannose 6-phosphorylation is induced during T-cell activation. As to expression, intestinal epithelium, dendritic cells and several immune system tissues.

The protein localises to the secreted. The protein resides in the cell membrane. It localises to the apical cell membrane. It is found in the cell projection. Its subcellular location is the invadopodium membrane. The protein localises to the lamellipodium membrane. The protein resides in the cell junction. It localises to the membrane raft. The catalysed reaction is Release of an N-terminal dipeptide, Xaa-Yaa-|-Zaa-, from a polypeptide, preferentially when Yaa is Pro, provided Zaa is neither Pro nor hydroxyproline.. With respect to regulation, inhibited by GPC3 and diprotin A. Its function is as follows. Cell surface glycoprotein receptor involved in the costimulatory signal essential for T-cell receptor (TCR)-mediated T-cell activation. Acts as a positive regulator of T-cell coactivation, by binding at least ADA, CAV1, IGF2R, and PTPRC. Its binding to CAV1 and CARD11 induces T-cell proliferation and NF-kappa-B activation in a T-cell receptor/CD3-dependent manner. Its interaction with ADA also regulates lymphocyte-epithelial cell adhesion. In association with FAP is involved in the pericellular proteolysis of the extracellular matrix (ECM), the migration and invasion of endothelial cells into the ECM. May be involved in the promotion of lymphatic endothelial cells adhesion, migration and tube formation. When overexpressed, enhanced cell proliferation, a process inhibited by GPC3. Also acts as a serine exopeptidase with a dipeptidyl peptidase activity that regulates various physiological processes by cleaving peptides in the circulation, including many chemokines, mitogenic growth factors, neuropeptides and peptide hormones. Removes N-terminal dipeptides sequentially from polypeptides having unsubstituted N-termini provided that the penultimate residue is proline. The polypeptide is Dipeptidyl peptidase 4 (DPP4) (Bos taurus (Bovine)).